Here is a 299-residue protein sequence, read N- to C-terminus: MAEEQAYHVNKGLECIKALRARPLDPLVVEEALAAWVETSEGQTLDRMSSDEAEADHQDISKPCFPAAGPGKSSMSRCHDQGLRGSNSCDEELGAFIGDSSMHSTEVQHYHVYDHSGEKVEGVEDADSILVQSGADDGVEVWGGDEESENSDVDSGEPDPEGSAPADWGSSPISPATRASDVETVEGDEIQKLLEDQSRIRKMTKAGKTLVVPPIPSQERPTASEKPIKKGHRREIDLIWNDGRVFIDRWCNPTCSKVTVGTVRAKCICGECPRVCEQCITDSGIENRIWYHNLADIPE.

3 disordered regions span residues Asp56–His79, Asp137–Glu186, and Lys205–Lys229. Residues Asp137–Pro160 show a composition bias toward acidic residues. The Zn(2+) site is built by His232, Cys251, Cys255, Cys267, Cys269, Cys272, Cys276, and Cys279.

This sequence belongs to the paramyxoviruses V protein family. In terms of assembly, interacts with host IFIH1/MDA5 and DHX58/LGP2. Interacts with host TYK2; this interaction inhibits the type I interferon signaling pathway.

It is found in the host cytoplasm. In terms of biological role, plays an essential role in the inhibition of host immune response. Prevents the establishment of cellular antiviral state by blocking interferon-alpha/beta (IFN-alpha/beta) production and signaling pathway. Interacts with host IFIH1/MDA5 and DHX58/LGP2 to inhibit the transduction pathway involved in the activation of IFN-beta promoter, thus protecting the virus against cell antiviral state. Blocks the type I interferon signaling pathway by interacting with host TYK2 and thereby inhibiting downstream STAT1 and STAT2 phosphorylation. This chain is Non-structural protein V (P/V), found in Bos indicus (Zebu).